The chain runs to 118 residues: Ig heavy chain V region X24 (118 aa).

Residues 1–111 enclose the Ig-like domain; the sequence is EVKLLESGGG…GYFDYWGQGT (111 aa).

In Mus musculus (Mouse), this protein is Ig heavy chain V region X24.